We begin with the raw amino-acid sequence, 185 residues long: Erythropoietin (185 aa).

The first 22 residues, 1–22 (MLQKRGRGLLVLLLMLLEWTRP), serve as a signal peptide directing secretion. 2 cysteine pairs are disulfide-bonded: Cys32–Cys180 and Cys54–Cys58.

The protein belongs to the EPO/TPO family.

The protein localises to the secreted. Functionally, erythropoietin is the principal hormone involved in the regulation of erythrocyte differentiation and the maintenance of a physiological level of circulating erythrocyte mass. The chain is Erythropoietin (epo) from Epinephelus coioides (Orange-spotted grouper).